A 179-amino-acid polypeptide reads, in one-letter code: Large ribosomal subunit protein uL6 (179 aa).

The protein belongs to the universal ribosomal protein uL6 family. As to quaternary structure, part of the 50S ribosomal subunit.

Its function is as follows. This protein binds to the 23S rRNA, and is important in its secondary structure. It is located near the subunit interface in the base of the L7/L12 stalk, and near the tRNA binding site of the peptidyltransferase center. This Chloroherpeton thalassium (strain ATCC 35110 / GB-78) protein is Large ribosomal subunit protein uL6.